The sequence spans 120 residues: Large ribosomal subunit protein uL18 (120 aa).

The protein belongs to the universal ribosomal protein uL18 family. As to quaternary structure, part of the 50S ribosomal subunit; part of the 5S rRNA/L5/L18/L25 subcomplex. Contacts the 5S and 23S rRNAs.

Its function is as follows. This is one of the proteins that bind and probably mediate the attachment of the 5S RNA into the large ribosomal subunit, where it forms part of the central protuberance. The chain is Large ribosomal subunit protein uL18 from Gluconacetobacter diazotrophicus (strain ATCC 49037 / DSM 5601 / CCUG 37298 / CIP 103539 / LMG 7603 / PAl5).